A 129-amino-acid chain; its full sequence is MASSVVRATVRAVSKRKIQATRAALTLTPSAVQKIKQLLKDQPEHVGVKVGVRTRGCNGLSYTLEYTKSKGDSDEEVVQDGVRVFIEKKAQLTLLGTEMDYVEDKLSSEFVFNNPNIKGTCGCGESFNI.

The N-terminal 12 residues, 1–12 (MASSVVRATVRA), are a transit peptide targeting the mitochondrion. Residues Cys-57, Cys-121, and Cys-123 each coordinate Fe cation.

Belongs to the HesB/IscA family.

The protein resides in the mitochondrion. Its function is as follows. Involved in the maturation of mitochondrial 4Fe-4S proteins functioning late in the iron-sulfur cluster assembly pathway. Probably involved in the binding of an intermediate of Fe/S cluster assembly. The protein is Iron-sulfur cluster assembly 1 homolog, mitochondrial (ISCA1) of Gallus gallus (Chicken).